The following is a 207-amino-acid chain: Small ribosomal subunit protein uS4 (207 aa).

Residues 97 to 159 (SRLDNVCYRM…AKSQLRIQAA (63 aa)) form the S4 RNA-binding domain.

The protein belongs to the universal ribosomal protein uS4 family. As to quaternary structure, part of the 30S ribosomal subunit. Contacts protein S5. The interaction surface between S4 and S5 is involved in control of translational fidelity.

In terms of biological role, one of the primary rRNA binding proteins, it binds directly to 16S rRNA where it nucleates assembly of the body of the 30S subunit. Its function is as follows. With S5 and S12 plays an important role in translational accuracy. The polypeptide is Small ribosomal subunit protein uS4 (Halorhodospira halophila (strain DSM 244 / SL1) (Ectothiorhodospira halophila (strain DSM 244 / SL1))).